The following is a 261-amino-acid chain: Ribosomal RNA small subunit methyltransferase J (261 aa).

S-adenosyl-L-methionine-binding positions include 109-110, 125-126, and Asp-179; these read RD and ER.

This sequence belongs to the methyltransferase superfamily. RsmJ family.

It localises to the cytoplasm. It catalyses the reaction guanosine(1516) in 16S rRNA + S-adenosyl-L-methionine = N(2)-methylguanosine(1516) in 16S rRNA + S-adenosyl-L-homocysteine + H(+). In terms of biological role, specifically methylates the guanosine in position 1516 of 16S rRNA. In Pseudomonas aeruginosa (strain ATCC 15692 / DSM 22644 / CIP 104116 / JCM 14847 / LMG 12228 / 1C / PRS 101 / PAO1), this protein is Ribosomal RNA small subunit methyltransferase J.